A 298-amino-acid polypeptide reads, in one-letter code: Movement protein BC1 (298 aa).

A disordered region spans residues 253 to 273 (LPEASLDPGDSVSQTQSMTKK).

The protein belongs to the begomovirus movement protein BC1 family. In terms of assembly, binds to dimeric supercoiled plasmid DNA. In terms of processing, phosphorylated.

The protein resides in the host cell membrane. It localises to the host microsome membrane. It is found in the host endoplasmic reticulum membrane. Transports viral genome to neighboring plant cells directly through plasmosdesmata, without any budding. The movement protein allows efficient cell to cell propagation, by bypassing the host cell wall barrier. Begomovirus genome is shuttled out of nucleus by Nuclear shuttle protein (NSP) and the movement protein transports the DNA-NSP complex to cell plasmodesmata and facilitates further movement across the cell wall. This chain is Movement protein BC1, found in Hewittia sublobata (Coralbush).